The following is a 372-amino-acid chain: N-methyl-L-tryptophan oxidase (372 aa).

4–34 (DLIIIGSGSVGAAAGYYATRAGLKVLMTDAH) is an FAD binding site. Residue Cys-307 is modified to S-8alpha-FAD cysteine.

This sequence belongs to the MSOX/MTOX family. MTOX subfamily. In terms of assembly, monomer. FAD serves as cofactor.

It catalyses the reaction N(alpha)-methyl-L-tryptophan + O2 + H2O = L-tryptophan + formaldehyde + H2O2. Its function is as follows. Catalyzes the oxidative demethylation of N-methyl-L-tryptophan. This Salmonella newport (strain SL254) protein is N-methyl-L-tryptophan oxidase.